We begin with the raw amino-acid sequence, 194 residues long: 7-methyl-GTP pyrophosphatase (194 aa).

The Proton acceptor role is filled by Asp-70.

It belongs to the Maf family. YceF subfamily. The cofactor is a divalent metal cation.

It is found in the cytoplasm. The catalysed reaction is N(7)-methyl-GTP + H2O = N(7)-methyl-GMP + diphosphate + H(+). In terms of biological role, nucleoside triphosphate pyrophosphatase that hydrolyzes 7-methyl-GTP (m(7)GTP). May have a dual role in cell division arrest and in preventing the incorporation of modified nucleotides into cellular nucleic acids. This Ralstonia nicotianae (strain ATCC BAA-1114 / GMI1000) (Ralstonia solanacearum) protein is 7-methyl-GTP pyrophosphatase.